A 757-amino-acid chain; its full sequence is Polymeric immunoglobulin receptor (757 aa).

The N-terminal stretch at 1–18 (MSRLFLACLLAIFPVVSM) is a signal peptide. In terms of domain architecture, Ig-like V-type 1; required for binding to polymeric IgA and IgM spans 19–126 (KSPIFGPEEV…RGLNFDVSLE (108 aa)). The Extracellular portion of the chain corresponds to 19–632 (KSPIFGPEEV…TGYSGSSKAL (614 aa)). Intrachain disulfides connect C40/C110, C56/C64, C152/C220, C257/C324, C271/C279, C370/C440, and C384/C394. An N-linked (GlcNAc...) asparagine glycan is attached at N83. 4 consecutive Ig-like V-type domains span residues 145–237 (GRTV…DLQV), 250–341 (RSSV…VQAW), 353–457 (ASPS…LKVV), and 461–560 (PSLK…VYVA). 2 N-linked (GlcNAc...) asparagine glycosylation sites follow: N420 and N468. 3 cysteine pairs are disulfide-bonded: C481–C543, C485–C519, and C495–C502. Residues 607 to 627 (KDAAGGPGAPADPGRPTGYSG) form a disordered region. A helical transmembrane segment spans residues 633-653 (VSTLVPLALVLVAGVVAIGVV). The Cytoplasmic segment spans residues 654–757 (RARHRKNVDR…AATQNGPTEA (104 aa)). A phosphoserine mark is found at S665, S674, S681, and S727. Positions 679–688 (ENSRDFEGRD) are enriched in basic and acidic residues. The interval 679–730 (ENSRDFEGRDNMGASPEAQETSLGGKDEFATTTEDTVESKEPKKAKRSSKEE) is disordered.

Interacts (mainly via CDR1-like domain) with dimeric IgA. Interacts (mainly via CDR2-like domain) with pentameric IgM. As to quaternary structure, either free or part of the secretory IgA (sIgA) complex that consists of two, four or five IgA monomers, and two additional non-Ig polypeptides, namely the JCHAIN and the secretory component (the proteolytic product of PIGR). Free secretory component interacts with bacterial antigens toxA of C.difficile and eae of E.coli. In the absence of dimeric IgA, Ser-727 is phosphorylated which allows PIGR to function normally. Post-translationally, N-glycosylated. N-glycosylation is required for anchoring IgA molecules to mucus, but is not necessary for Ig binding. As to expression, found in mammary gland, jejunum, lung, kidney and small intestine.

It localises to the cell membrane. Its subcellular location is the secreted. In terms of biological role, mediates selective transcytosis of polymeric IgA and IgM across mucosal epithelial cells. Binds polymeric IgA and IgM at the basolateral surface of epithelial cells. The complex is then transported across the cell to be secreted at the apical surface. During this process, a cleavage occurs that separates the extracellular (known as the secretory component) from the transmembrane segment. Functionally, through its N-linked glycans ensures anchoring of secretory IgA (sIgA) molecules to mucus lining the epithelial surface to neutralize extracellular pathogens. On its own (free form) may act as a non-specific microbial scavenger to prevent pathogen interaction with epithelial cells. The sequence is that of Polymeric immunoglobulin receptor (PIGR) from Bos taurus (Bovine).